The following is a 209-amino-acid chain: Large ribosomal subunit protein uL3 (209 aa).

Q150 is modified (N5-methylglutamine).

Belongs to the universal ribosomal protein uL3 family. As to quaternary structure, part of the 50S ribosomal subunit. Forms a cluster with proteins L14 and L19. In terms of processing, methylated by PrmB.

Functionally, one of the primary rRNA binding proteins, it binds directly near the 3'-end of the 23S rRNA, where it nucleates assembly of the 50S subunit. In Pasteurella multocida (strain Pm70), this protein is Large ribosomal subunit protein uL3.